Reading from the N-terminus, the 740-residue chain is Ribosomal protein S6 kinase alpha-3 (740 aa).

The tract at residues 1 to 38 is disordered; it reads MPLAQLADPWQKMAVESPSDSAENGQQIMDEPMGEEEI. Residues 18–27 show a composition bias toward polar residues; that stretch reads PSDSAENGQQ. The region spanning 68 to 327 is the Protein kinase 1 domain; that stretch reads FELLKVLGQG…VEEIKRHSFF (260 aa). Residues 74–82 and Lys-100 contribute to the ATP site; that span reads LGQGSFGKV. Catalysis depends on Asp-193, which acts as the Proton acceptor. Phosphoserine; by PDPK1 is present on Ser-227. The AGC-kinase C-terminal domain occupies 328–397; sequence STIDWNKLYR…VAITSDDESQ (70 aa). A Phosphothreonine modification is found at Thr-365. A phosphoserine mark is found at Ser-369 and Ser-375. Ser-386 is modified (phosphoserine; by autocatalysis and MAPKAPK2). Ser-415 bears the Phosphoserine mark. Positions 422-679 constitute a Protein kinase 2 domain; that stretch reads YEVKEDIGVG…AALVLRHPWI (258 aa). Residues 428–436 and Lys-451 contribute to the ATP site; that span reads IGVGSYSVC. Tyr-529 is modified (phosphotyrosine; by FGFR3). Asp-539 serves as the catalytic Proton acceptor. Ser-556 and Ser-715 each carry phosphoserine.

The protein belongs to the protein kinase superfamily. AGC Ser/Thr protein kinase family. S6 kinase subfamily. Forms a complex with either MAPK1/ERK2 or MAPK3/ERK1 in quiescent cells. Transiently dissociates following mitogenic stimulation. Interacts with NFATC4, ETV1/ER81 and FGFR1. The cofactor is Mg(2+). Post-translationally, activated by phosphorylation at Ser-227 by PDPK1. Autophosphorylated on Ser-386, as part of the activation process. May be phosphorylated at Thr-365 and Ser-369 by MAPK1/ERK2 and MAPK3/ERK1. Can also be activated via phosphorylation at Ser-386 by MAPKAPK2. N-terminal myristoylation results in an activated kinase in the absence of added growth factors. Expressed in many tissues, highest levels in skeletal muscle.

The protein resides in the nucleus. Its subcellular location is the cytoplasm. The enzyme catalyses L-seryl-[protein] + ATP = O-phospho-L-seryl-[protein] + ADP + H(+). It catalyses the reaction L-threonyl-[protein] + ATP = O-phospho-L-threonyl-[protein] + ADP + H(+). With respect to regulation, upon extracellular signal or mitogen stimulation, phosphorylated at Thr-577 in the C-terminal kinase domain (CTKD) by MAPK1/ERK2 and MAPK3/ERK1. The activated CTKD then autophosphorylates Ser-386, allowing binding of PDPK1, which in turn phosphorylates Ser-227 in the N-terminal kinase domain (NTDK) leading to the full activation of the protein and subsequent phosphorylation of the substrates by the NTKD. Serine/threonine-protein kinase that acts downstream of ERK (MAPK1/ERK2 and MAPK3/ERK1) signaling and mediates mitogenic and stress-induced activation of the transcription factors CREB1, ETV1/ER81 and NR4A1/NUR77, regulates translation through RPS6 and EIF4B phosphorylation, and mediates cellular proliferation, survival, and differentiation by modulating mTOR signaling and repressing pro-apoptotic function of BAD and DAPK1. In fibroblast, is required for EGF-stimulated phosphorylation of CREB1 and histone H3 at 'Ser-10', which results in the subsequent transcriptional activation of several immediate-early genes. In response to mitogenic stimulation (EGF and PMA), phosphorylates and activates NR4A1/NUR77 and ETV1/ER81 transcription factors and the cofactor CREBBP. Upon insulin-derived signal, acts indirectly on the transcription regulation of several genes by phosphorylating GSK3B at 'Ser-9' and inhibiting its activity. Phosphorylates RPS6 in response to serum or EGF via an mTOR-independent mechanism and promotes translation initiation by facilitating assembly of the preinitiation complex. In response to insulin, phosphorylates EIF4B, enhancing EIF4B affinity for the EIF3 complex and stimulating cap-dependent translation. Is involved in the mTOR nutrient-sensing pathway by directly phosphorylating TSC2 at 'Ser-1798', which potently inhibits TSC2 ability to suppress mTOR signaling, and mediates phosphorylation of RPTOR, which regulates mTORC1 activity and may promote rapamycin-sensitive signaling independently of the PI3K/AKT pathway. Mediates cell survival by phosphorylating the pro-apoptotic proteins BAD and DAPK1 and suppressing their pro-apoptotic function. Promotes the survival of hepatic stellate cells by phosphorylating CEBPB in response to the hepatotoxin carbon tetrachloride (CCl4). Is involved in cell cycle regulation by phosphorylating the CDK inhibitor CDKN1B, which promotes CDKN1B association with 14-3-3 proteins and prevents its translocation to the nucleus and inhibition of G1 progression. In LPS-stimulated dendritic cells, is involved in TLR4-induced macropinocytosis, and in myeloma cells, acts as effector of FGFR3-mediated transformation signaling, after direct phosphorylation at Tyr-529 by FGFR3. Negatively regulates EGF-induced MAPK1/3 phosphorylation via phosphorylation of SOS1. Phosphorylates SOS1 at 'Ser-1134' and 'Ser-1161' that create YWHAB and YWHAE binding sites and which contribute to the negative regulation of MAPK1/3 phosphorylation. Phosphorylates EPHA2 at 'Ser-897', the RPS6KA-EPHA2 signaling pathway controls cell migration. Acts as a regulator of osteoblast differentiation by mediating phosphorylation of ATF4, thereby promoting ATF4 transactivation activity. The protein is Ribosomal protein S6 kinase alpha-3 (RPS6KA3) of Homo sapiens (Human).